Consider the following 182-residue polypeptide: Peptidyl-tRNA hydrolase (182 aa).

Tyrosine 14 is a binding site for tRNA. Catalysis depends on histidine 19, which acts as the Proton acceptor. Positions 64, 66, and 112 each coordinate tRNA.

It belongs to the PTH family. In terms of assembly, monomer.

The protein localises to the cytoplasm. The catalysed reaction is an N-acyl-L-alpha-aminoacyl-tRNA + H2O = an N-acyl-L-amino acid + a tRNA + H(+). Hydrolyzes ribosome-free peptidyl-tRNAs (with 1 or more amino acids incorporated), which drop off the ribosome during protein synthesis, or as a result of ribosome stalling. In terms of biological role, catalyzes the release of premature peptidyl moieties from peptidyl-tRNA molecules trapped in stalled 50S ribosomal subunits, and thus maintains levels of free tRNAs and 50S ribosomes. This chain is Peptidyl-tRNA hydrolase, found in Wolbachia sp. subsp. Brugia malayi (strain TRS).